The chain runs to 331 residues: MIVLGIESTAHTFGVGVAQDQVPFILANERHTFVPQTGGMKPSEAARHHTLVAHEILRGALDRARISIRDVDGIAVALGPGMGPTLRVGAVVARALSLRFNKKLVPVNHGIGHIEIGYLTTEAKDPLILYLSGGNTIITTYYRRRFRIFGETLDIALGNMMDTFVREVGLAPPYIVDGKHKIDICAEQGSSIIDLPYTVKGEDMSFSGLLTAALRAVKKHNLHDVCLSLREIAYGMLLEATERALALTEKGEIMIVGGVAASGSLRSKLEKLSNDWGVGLKVVPTSFAGDNGAMIAYAGLLALKHGVHIDVKDSTIRPRWRIDEVDIPWRD.

His109, His113, and Tyr130 together coordinate Fe cation. Residues Tyr130–Gly134, Asp162, Asp183, and Ser262 each bind substrate. Asp290 lines the Fe cation pocket.

Belongs to the KAE1 / TsaD family. Fe(2+) is required as a cofactor.

The protein localises to the cytoplasm. The enzyme catalyses L-threonylcarbamoyladenylate + adenosine(37) in tRNA = N(6)-L-threonylcarbamoyladenosine(37) in tRNA + AMP + H(+). Functionally, required for the formation of a threonylcarbamoyl group on adenosine at position 37 (t(6)A37) in tRNAs that read codons beginning with adenine. Is probably involved in the transfer of the threonylcarbamoyl moiety of threonylcarbamoyl-AMP (TC-AMP) to the N6 group of A37. In Metallosphaera sedula (strain ATCC 51363 / DSM 5348 / JCM 9185 / NBRC 15509 / TH2), this protein is tRNA N6-adenosine threonylcarbamoyltransferase.